A 362-amino-acid chain; its full sequence is Fructose-bisphosphate aldolase (362 aa).

Asp-33 lines the dihydroxyacetone phosphate pocket. Residues Ser-35 and Thr-38 each contribute to the D-glyceraldehyde 3-phosphate site. Beta-D-fructose 1,6-bisphosphate is bound at residue Arg-42. Residue Lys-106 participates in D-glyceraldehyde 3-phosphate binding. Residue Lys-145 participates in dihydroxyacetone phosphate binding. Glu-188 provides a ligand contact to D-glyceraldehyde 3-phosphate. Residue Glu-188 is the Proton acceptor of the active site. Dihydroxyacetone phosphate contacts are provided by Lys-230, Ser-272, and Gly-273. The active-site Schiff-base intermediate with dihydroxyacetone phosphate is the Lys-230. Beta-D-fructose 1,6-bisphosphate-binding positions include Ser-272–Gly-274 and Ser-300. Residues Gly-302 and Arg-303 each contribute to the dihydroxyacetone phosphate site. Position 303 (Arg-303) interacts with beta-D-fructose 1,6-bisphosphate.

Belongs to the class I fructose-bisphosphate aldolase family. Homotetramer. Interacts with TRAP (via cytoplasmic domain); the interaction prevents substrate binding and thereby inhibits aldolase activity. Interacts with MTRAP (via cytoplasmic domain); MTRAP phosphorylation may increase the binding to FBPA. Interact with RH1 (via cytoplasmic domain). Interacts with RH2b (via cytoplasmic domain). Interacts with RH4 (via cytoplasmic domain). Interacts with AMA1 (via cytoplasmic domain); the interaction is weak, however it may be increased upon AMA1 phosphorylation. Interacts with EBA140 (via cytoplasmic domain); the interaction is weak. Interacts with EBA175 (via cytoplasmic domain); the interaction is weak. Interacts with EBA181 (via cytoplasmic domain); the interaction is weak. Interacts with G-actin and F-actin. May interact with ACT2/actin II; the interaction inhibits FBPA catalytic activity. Interacts with human SLC4A1/band 3 (via N-terminus); the interaction inhibits FBPA catalytic activity.

It is found in the cytoplasm. Its subcellular location is the membrane. It localises to the host cell membrane. The enzyme catalyses beta-D-fructose 1,6-bisphosphate = D-glyceraldehyde 3-phosphate + dihydroxyacetone phosphate. It participates in carbohydrate degradation; glycolysis; D-glyceraldehyde 3-phosphate and glycerone phosphate from D-glucose: step 4/4. The cytoplasmic tail of TRAP and probably other adhesins acts as a competitive inhibitor as the binding sites of the glycolytic substrate fructose 1,6-bisphosphate and TRAP partially overlap. Inhibited by suramin, an antiparasitic drug used to treat Trypanosome-mediated infection. Functionally, plays a key role in glycolysis by catalyzing the cleavage of fructose 1,6-bisphosphate into dihydroxyacetone phosphate and glyceraldehyde 3-phosphate. Independently of its catalytic activity, connects the actin filaments, and thus the actomyosin motor, to cell surface adhesins of the thrombospondin-related anonymous protein (TRAP), the erythrocyte binding ligand (EBL) and reticulocyte binding homolog (RH) protein families; this interaction is probably involved in transducing the motor force across the parasite surface required for sporozoite and ookinete gliding motility and merozoite invasion. Stimulates actin polymerisation. In Plasmodium falciparum (isolate K1 / Thailand), this protein is Fructose-bisphosphate aldolase.